A 161-amino-acid chain; its full sequence is RNA pyrophosphohydrolase (161 aa).

The Nudix hydrolase domain maps to Pro-12–Asn-154. The Nudix box motif lies at Gly-46–Gly-67.

This sequence belongs to the Nudix hydrolase family. RppH subfamily. The cofactor is a divalent metal cation.

Functionally, accelerates the degradation of transcripts by removing pyrophosphate from the 5'-end of triphosphorylated RNA, leading to a more labile monophosphorylated state that can stimulate subsequent ribonuclease cleavage. The chain is RNA pyrophosphohydrolase from Orientia tsutsugamushi (strain Boryong) (Rickettsia tsutsugamushi).